The sequence spans 189 residues: uncharacterized protein (189 aa).

Belongs to the flavoredoxin family. FMN serves as cofactor.

This is an uncharacterized protein from Escherichia coli (strain K12).